Consider the following 439-residue polypeptide: Taxadien-5-alpha-ol O-acetyltransferase (439 aa).

Active-site proton acceptor residues include His164 and Asp373.

The protein belongs to the plant acyltransferase family.

It catalyses the reaction taxa-4(20),11-dien-5alpha-ol + acetyl-CoA = taxa-4(20),11-dien-5alpha-yl acetate + CoA. It functions in the pathway alkaloid biosynthesis; taxol biosynthesis; 10-deacetyl-2-debenzoylbaccatin III from taxa-4(20),11-dien-5alpha-ol: step 1/3. The sequence is that of Taxadien-5-alpha-ol O-acetyltransferase from Taxus chinensis (Chinese yew).